Consider the following 346-residue polypeptide: Dehydrogenase azaJ (346 aa).

NADP(+) is bound at residue 43 to 48; that stretch reads VDYATQ. 133–140 is a substrate binding site; sequence LAFSTAIV. Residues 170–173, 193–196, Tyr211, and 251–252 contribute to the NADP(+) site; these read ATSV, SPHN, and LN. 269–273 is a substrate binding site; the sequence is APPNV. 336–337 lines the NADP(+) pocket; the sequence is VS.

Belongs to the zinc-containing alcohol dehydrogenase family.

The protein operates within secondary metabolite biosynthesis. In terms of biological role, dehydrogenase; part of the gene cluster that mediates the biosynthesis of azaphilones, a class of fungal metabolites characterized by a highly oxygenated pyrano-quinone bicyclic core and exhibiting a broad range of bioactivities. In the first step, the non-reducing polyketide synthase azaA forms the hexaketide precursor from successive condensations of five malonyl-CoA units, presumably with a simple acetyl-CoA starter unit. The reactive polyketide chain then undergoes a PT-mediated C2-C7 cyclization to afford the aromatic ring and is eventually released as an aldehyde through the R-domain. The putative ketoreductase azaE is proposed to catalyze the reduction of the terminal ketone resulting in the early culture product FK17-P2a. The monooxygenase azaH was demonstrated to be the only enzyme required to convert FK17-P2a to azanigerone E. AzaH first hydroxylates the benzaldehyde intermediate FK17-P2a at C4, which triggers the formation of the pyran-ring to afford azanigerone E. In parallel, the 2,4-dimethylhexanoyl chain is synthesized by the HR-PKS azaB and is proposed to be transferred to the C4-hydroxyl of azanigerone E by the acyltransferase azaD directly from the ACP domain of azaB. Alternatively, the 2,4-dimethyl-hexanoyl chain may be offloaded from the HR-PKS as a carboxylic acid and converted to an acyl-CoA by azaF. The resulting acyl-CoA molecule could then be taken up as a substrate by AzaD to form azanigerone B. To yield the carboxylic acid substituent in azanigerone A, the hydroxypropyl side chain of azanigerone B would need to undergo a C-C oxidative cleavage catalyzed by cytochrome P450 AzaI. AzaI is proposed to act on a vicinal diol that leads to a C-C bond scission either through an alkoxyradical intermediate or a peroxy complex. In the biosynthesis of azanigerone A, azanigerone B first undergoes hydroxylation at C10, possibly catalyzed by one of the two FAD-dependent monooxygenases encoded in the cluster, azaG or azaL, resulting in the vicinal diol azanigerone C. Oxidative cleavage of azanigerone C by azaI would yield the corresponding aldehyde derivative of azanigerone A. Finally, the dehydrogenase azaJ is proposed to convert the aldehyde functional group into the carboxylic acid, completing the conversion from azanigerone B to azanigerone A. Alternatively, the oxidation of aldehyde to carboxylic acid may be catalyzed by the same P450 enzyme azaI via consecutive oxidation or by endogenous alcohol dehydrogenase. This Aspergillus niger (strain ATCC 1015 / CBS 113.46 / FGSC A1144 / LSHB Ac4 / NCTC 3858a / NRRL 328 / USDA 3528.7) protein is Dehydrogenase azaJ.